The chain runs to 365 residues: S-adenosylmethionine:tRNA ribosyltransferase-isomerase (365 aa).

This sequence belongs to the QueA family. In terms of assembly, monomer.

The protein resides in the cytoplasm. It catalyses the reaction 7-aminomethyl-7-carbaguanosine(34) in tRNA + S-adenosyl-L-methionine = epoxyqueuosine(34) in tRNA + adenine + L-methionine + 2 H(+). It participates in tRNA modification; tRNA-queuosine biosynthesis. In terms of biological role, transfers and isomerizes the ribose moiety from AdoMet to the 7-aminomethyl group of 7-deazaguanine (preQ1-tRNA) to give epoxyqueuosine (oQ-tRNA). The chain is S-adenosylmethionine:tRNA ribosyltransferase-isomerase from Helicobacter hepaticus (strain ATCC 51449 / 3B1).